A 289-amino-acid polypeptide reads, in one-letter code: Mas-related G-protein coupled receptor member G (289 aa).

Residues 1–13 are Extracellular-facing; sequence MFSIFNIWGTFNK. Residues 14 to 34 traverse the membrane as a helical segment; that stretch reads VLFFLSLTVSLAGLVGNALLL. Residues 35–52 lie on the Cytoplasmic side of the membrane; that stretch reads WHLGLHIKKGPFNTYLLH. The helical transmembrane segment at 53–73 threads the bilayer; sequence LAAADFLFLSCQVGFSIATIV. Topologically, residues 74–78 are extracellular; that stretch reads SGHED. A helical transmembrane segment spans residues 79-99; that stretch reads TLYFPVTFLWFAVGLWLLAAF. Residues 100-120 lie on the Cytoplasmic side of the membrane; it reads SVDCCLAYMFPSFCSPNRRPR. A helical membrane pass occupies residues 121-141; sequence FTSVVLCLVIWALTMPAVLLP. Over 142 to 164 the chain is Extracellular; the sequence is ANACGLLKNGMSLLVCLKYHWTS. The chain crosses the membrane as a helical span at residues 165–185; sequence VTWLAVLSGMACGASKFLLIF. The Cytoplasmic segment spans residues 186-199; sequence GNCCSSQPPPKFCK. A helical transmembrane segment spans residues 200–220; sequence LAQCSGILLFFCRLPLVVYWC. Topologically, residues 221 to 222 are extracellular; that stretch reads LR. Residues 223–243 form a helical membrane-spanning segment; sequence PVLKFLLPFFFPLATLLACID. Residues 244 to 289 lie on the Cytoplasmic side of the membrane; it reads SSAKPLLYYMKGRQLRKDPLQVALNRALGEESQSGLGGLSLPMHQV.

This sequence belongs to the G-protein coupled receptor 1 family. Mas subfamily.

The protein resides in the cell membrane. Orphan receptor. May regulate nociceptor function and/or development, including the sensation or modulation of pain. The sequence is that of Mas-related G-protein coupled receptor member G (Mrgprg) from Mus musculus (Mouse).